The following is a 405-amino-acid chain: Tyrosine--tRNA ligase (405 aa).

An L-tyrosine-binding site is contributed by Tyr35. Residues 40-49 carry the 'HIGH' region motif; sequence ATSSSLHIGH. Residues Tyr166 and Gln170 each contribute to the L-tyrosine site. Positions 226–230 match the 'KMSKS' region motif; sequence KMGKS. ATP is bound at residue Lys229. In terms of domain architecture, S4 RNA-binding spans 340–405; it reads ILLVDLMLDS…GKKKFLRIVI (66 aa).

The protein belongs to the class-I aminoacyl-tRNA synthetase family. TyrS type 1 subfamily. As to quaternary structure, homodimer.

The protein localises to the cytoplasm. It carries out the reaction tRNA(Tyr) + L-tyrosine + ATP = L-tyrosyl-tRNA(Tyr) + AMP + diphosphate + H(+). Its function is as follows. Catalyzes the attachment of tyrosine to tRNA(Tyr) in a two-step reaction: tyrosine is first activated by ATP to form Tyr-AMP and then transferred to the acceptor end of tRNA(Tyr). This Borreliella burgdorferi (strain ATCC 35210 / DSM 4680 / CIP 102532 / B31) (Borrelia burgdorferi) protein is Tyrosine--tRNA ligase.